The following is a 317-amino-acid chain: Protein-methionine-sulfoxide reductase catalytic subunit MsrP (317 aa).

The segment at residues 1–40 (MNKFTKTDVTPEKLFIQRRKIIQGMSVLSAAAAFPNLAAA) is a signal peptide (tat-type signal). Mo-molybdopterin-binding positions include asparagine 72, 75–76 (YE), cysteine 129, threonine 164, asparagine 216, arginine 221, and 232–234 (SIK).

It belongs to the MsrP family. Heterodimer of a catalytic subunit (MsrP) and a heme-binding subunit (MsrQ). It depends on Mo-molybdopterin as a cofactor. Post-translationally, predicted to be exported by the Tat system. The position of the signal peptide cleavage has not been experimentally proven.

It is found in the periplasm. The enzyme catalyses L-methionyl-[protein] + a quinone + H2O = L-methionyl-(S)-S-oxide-[protein] + a quinol. It catalyses the reaction L-methionyl-[protein] + a quinone + H2O = L-methionyl-(R)-S-oxide-[protein] + a quinol. Part of the MsrPQ system that repairs oxidized periplasmic proteins containing methionine sulfoxide residues (Met-O), using respiratory chain electrons. Thus protects these proteins from oxidative-stress damage caused by reactive species of oxygen and chlorine generated by the host defense mechanisms. MsrPQ is essential for the maintenance of envelope integrity under bleach stress, rescuing a wide series of structurally unrelated periplasmic proteins from methionine oxidation. The catalytic subunit MsrP is non-stereospecific, being able to reduce both (R-) and (S-) diastereoisomers of methionine sulfoxide. This Actinobacillus succinogenes (strain ATCC 55618 / DSM 22257 / CCUG 43843 / 130Z) protein is Protein-methionine-sulfoxide reductase catalytic subunit MsrP.